The chain runs to 268 residues: Thymidylate synthase (268 aa).

Residues R26 and 131–132 (RR) each bind dUMP. Residue C151 is the Nucleophile of the active site. DUMP contacts are provided by residues 171–174 (RSAD), N182, and 212–214 (HIY). A (6R)-5,10-methylene-5,6,7,8-tetrahydrofolate-binding site is contributed by D174. Position 267 (S267) interacts with (6R)-5,10-methylene-5,6,7,8-tetrahydrofolate.

Belongs to the thymidylate synthase family. Bacterial-type ThyA subfamily. Homodimer.

It is found in the cytoplasm. The enzyme catalyses dUMP + (6R)-5,10-methylene-5,6,7,8-tetrahydrofolate = 7,8-dihydrofolate + dTMP. The protein operates within pyrimidine metabolism; dTTP biosynthesis. Functionally, catalyzes the reductive methylation of 2'-deoxyuridine-5'-monophosphate (dUMP) to 2'-deoxythymidine-5'-monophosphate (dTMP) while utilizing 5,10-methylenetetrahydrofolate (mTHF) as the methyl donor and reductant in the reaction, yielding dihydrofolate (DHF) as a by-product. This enzymatic reaction provides an intracellular de novo source of dTMP, an essential precursor for DNA biosynthesis. This Corynebacterium aurimucosum (strain ATCC 700975 / DSM 44827 / CIP 107346 / CN-1) (Corynebacterium nigricans) protein is Thymidylate synthase.